The chain runs to 247 residues: Phosphoribosylaminoimidazole-succinocarboxamide synthase (247 aa).

It belongs to the SAICAR synthetase family.

It catalyses the reaction 5-amino-1-(5-phospho-D-ribosyl)imidazole-4-carboxylate + L-aspartate + ATP = (2S)-2-[5-amino-1-(5-phospho-beta-D-ribosyl)imidazole-4-carboxamido]succinate + ADP + phosphate + 2 H(+). Its pathway is purine metabolism; IMP biosynthesis via de novo pathway; 5-amino-1-(5-phospho-D-ribosyl)imidazole-4-carboxamide from 5-amino-1-(5-phospho-D-ribosyl)imidazole-4-carboxylate: step 1/2. The sequence is that of Phosphoribosylaminoimidazole-succinocarboxamide synthase from Herpetosiphon aurantiacus (strain ATCC 23779 / DSM 785 / 114-95).